The following is a 586-amino-acid chain: Lamin-B1 (586 aa).

The interval 1–31 (MATATPVPPRMGSRAGGPTTPLSPTRLSRLQ) is disordered. A2 is modified (N-acetylalanine). Positions 2–34 (ATATPVPPRMGSRAGGPTTPLSPTRLSRLQEKE) are head. 2 positions are modified to phosphothreonine: T3 and T5. R14 carries the post-translational modification Omega-N-methylarginine. T20 carries the post-translational modification Phosphothreonine. A Phosphoserine modification is found at S23. T25 bears the Phosphothreonine mark. Residue S28 is modified to Phosphoserine. In terms of domain architecture, IF rod spans 32–388 (EKEELRELND…KLLEGEEERL (357 aa)). A coil 1A region spans residues 35–69 (ELRELNDRLAVYIDKVRSLETENSALQLQVTEREE). The linker 1 stretch occupies residues 70-81 (VRGRELTGLKAL). Positions 82 to 215 (YETELADARR…EFRKSMYEEE (134 aa)) are coil 1B. K102 is covalently cross-linked (Glycyl lysine isopeptide (Lys-Gly) (interchain with G-Cter in SUMO2)). K111 is subject to N6-acetyllysine. K123 is covalently cross-linked (Glycyl lysine isopeptide (Lys-Gly) (interchain with G-Cter in SUMO2)). Residue S126 is modified to Phosphoserine. K145 participates in a covalent cross-link: Glycyl lysine isopeptide (Lys-Gly) (interchain with G-Cter in SUMO2). An N6-acetyllysine; alternate modification is found at K157. K157 participates in a covalent cross-link: Glycyl lysine isopeptide (Lys-Gly) (interchain with G-Cter in SUMO2); alternate. S158 is subject to Phosphoserine. A Glycyl lysine isopeptide (Lys-Gly) (interchain with G-Cter in SUMO2) cross-link involves residue K181. Phosphoserine occurs at positions 200, 210, and 232. The tract at residues 216-243 (INETRRKHETRLVEVDSGRQIEYEYKLA) is linker 2. Residues K241 and K261 each participate in a glycyl lysine isopeptide (Lys-Gly) (interchain with G-Cter in SUMO2) cross-link. Residues 244–386 (QALHEMREQH…YRKLLEGEEE (143 aa)) are coil 2. An N6-acetyllysine; alternate modification is found at K271. A Glycyl lysine isopeptide (Lys-Gly) (interchain with G-Cter in SUMO2); alternate cross-link involves residue K271. S278 and S302 each carry phosphoserine. K312 participates in a covalent cross-link: Glycyl lysine isopeptide (Lys-Gly) (interchain with G-Cter in SUMO2). At K330 the chain carries N6-acetyllysine; alternate. Residue K330 forms a Glycyl lysine isopeptide (Lys-Gly) (interchain with G-Cter in SUMO2); alternate linkage. A phosphoserine mark is found at S375 and S393. Positions 387–586 (RLKLSPSPSS…RASNRSCAIM (200 aa)) are tail. The disordered stretch occupies residues 388-432 (LKLSPSPSSRVTVSRASSSRSVRTTRGKRKRVDVEESEASSSVSI). Residues 390–409 (LSPSPSSRVTVSRASSSRSV) are compositionally biased toward low complexity. T399 carries an O-linked (GlcNAc) threonine glycan. R413 carries the post-translational modification Omega-N-methylarginine. A Nuclear localization signal motif is present at residues 415–420 (KRKRVD). The region spanning 430–546 (VSISHSASAT…EEVAQRSTVF (117 aa)) is the LTD domain. The residue at position 483 (K483) is an N6-acetyllysine. Residue K532 forms a Glycyl lysine isopeptide (Lys-Gly) (interchain with G-Cter in SUMO2) linkage. S534 carries the post-translational modification Phosphoserine. K547 is covalently cross-linked (Glycyl lysine isopeptide (Lys-Gly) (interchain with G-Cter in SUMO2)). T575 carries the phosphothreonine modification. C583 carries the post-translational modification Cysteine methyl ester. The S-farnesyl cysteine moiety is linked to residue C583. Residues 584–586 (AIM) constitute a propeptide, removed in mature form.

Belongs to the intermediate filament family. In terms of assembly, homodimer. Lamin dimers then assemble into dimeric head-to-tail polymers. Ultimately, two head-to-tail polymers assemble laterally into a protofilament with a uniformly shaped rod of 3.5 nm in diameter. Interacts with SPAG4 and SEPT12. B-type lamins undergo a series of modifications, such as farnesylation and phosphorylation. Increased phosphorylation of the lamins occurs before envelope disintegration and probably plays a role in regulating lamin associations. In terms of processing, phosphorylation plays a key role in lamin organization, subcellular localization and nuclear envelope disintegration. Phosphorylation by CDK1 at Ser-23 and Ser-393 at the onset of mitosis drives lamin disassembly and nuclear envelope breakdown.

It localises to the nucleus lamina. Functionally, lamins are intermediate filament proteins that assemble into a filamentous meshwork, and which constitute the major components of the nuclear lamina, a fibrous layer on the nucleoplasmic side of the inner nuclear membrane. Lamins provide a framework for the nuclear envelope, bridging the nuclear envelope and chromatin, thereby playing an important role in nuclear assembly, chromatin organization, nuclear membrane and telomere dynamics. The structural integrity of the lamina is strictly controlled by the cell cycle, as seen by the disintegration and formation of the nuclear envelope in prophase and telophase, respectively. The polypeptide is Lamin-B1 (LMNB1) (Homo sapiens (Human)).